The chain runs to 277 residues: MLIYPPIDPVALQIGPLAIHWYGLSYLAAFGLFMLLGCRRLRHPPFAGRTGPGAWSRKDVEDILFLGVAGVVLGGRLGYCLFYKPDYYLGHPLEVFALWQGGMAFHGGLLGVIVAMLWFAHSRQRPLLQVADFVAPCVPTGLAAGRVGNFINGELWGRFASPDLPWGMVFAHSGSMQPRHPSQVYQFLLEGLLLFVLLWLYARRERRQGQVAAAFLVGYGVLRFIAEQFREPDAFLGILALGMSMGQWLCLPMIAGGVLLWCRAARRRPAVARGSRA.

A run of 3 helical transmembrane segments spans residues 17 to 37 (LAIHWYGLSYLAAFGLFMLLG), 63 to 83 (ILFLGVAGVVLGGRLGYCLFY), and 101 to 121 (GGMAFHGGLLGVIVAMLWFAH). An a 1,2-diacyl-sn-glycero-3-phospho-(1'-sn-glycerol)-binding site is contributed by Arg146. A run of 3 helical transmembrane segments spans residues 182–202 (SQVYQFLLEGLLLFVLLWLYA), 209–229 (GQVAAAFLVGYGVLRFIAEQF), and 234–254 (AFLGILALGMSMGQWLCLPMI).

It belongs to the Lgt family.

The protein localises to the cell inner membrane. It carries out the reaction L-cysteinyl-[prolipoprotein] + a 1,2-diacyl-sn-glycero-3-phospho-(1'-sn-glycerol) = an S-1,2-diacyl-sn-glyceryl-L-cysteinyl-[prolipoprotein] + sn-glycerol 1-phosphate + H(+). The protein operates within protein modification; lipoprotein biosynthesis (diacylglyceryl transfer). In terms of biological role, catalyzes the transfer of the diacylglyceryl group from phosphatidylglycerol to the sulfhydryl group of the N-terminal cysteine of a prolipoprotein, the first step in the formation of mature lipoproteins. The chain is Phosphatidylglycerol--prolipoprotein diacylglyceryl transferase from Verminephrobacter eiseniae (strain EF01-2).